Reading from the N-terminus, the 363-residue chain is UDP-N-acetylglucosamine--N-acetylmuramyl-(pentapeptide) pyrophosphoryl-undecaprenol N-acetylglucosamine transferase (363 aa).

UDP-N-acetyl-alpha-D-glucosamine is bound by residues 10–12, asparagine 124, serine 195, isoleucine 248, and glutamine 293; that span reads TGG.

The protein belongs to the glycosyltransferase 28 family. MurG subfamily.

The protein localises to the cell membrane. The enzyme catalyses Mur2Ac(oyl-L-Ala-gamma-D-Glu-L-Lys-D-Ala-D-Ala)-di-trans,octa-cis-undecaprenyl diphosphate + UDP-N-acetyl-alpha-D-glucosamine = beta-D-GlcNAc-(1-&gt;4)-Mur2Ac(oyl-L-Ala-gamma-D-Glu-L-Lys-D-Ala-D-Ala)-di-trans,octa-cis-undecaprenyl diphosphate + UDP + H(+). Its pathway is cell wall biogenesis; peptidoglycan biosynthesis. In terms of biological role, cell wall formation. Catalyzes the transfer of a GlcNAc subunit on undecaprenyl-pyrophosphoryl-MurNAc-pentapeptide (lipid intermediate I) to form undecaprenyl-pyrophosphoryl-MurNAc-(pentapeptide)GlcNAc (lipid intermediate II). The sequence is that of UDP-N-acetylglucosamine--N-acetylmuramyl-(pentapeptide) pyrophosphoryl-undecaprenol N-acetylglucosamine transferase from Lacticaseibacillus casei (strain BL23) (Lactobacillus casei).